The chain runs to 320 residues: MPRLQQKWLNSRECPTLRGEAAKGLFPTKDDPSAHKRMSPSDKDILILCCKLGIALLCLGLLGEVAVRARRALTLDSFNNNSSVQDYNLNDSENSTFLLGQGPQPTSSYKPHRICPLEIEIRMLAKKYIFTNKTNPIGRLLVTMLRNESLSFSTIFTQIQKLEMGIENRKRRSKSIEEQVQGLLASGLEVKKGKKSVFVKIGDRWWQPRTYRGPYIYRPTDAPLPYTGRYDLNWDRWVTINGYKVLYRSLPFRERLARARPPWCMLTEKEKDDMKQQVHDYIYLGTGMHFWGKVFHTKEGAVAGLIEHYSAKTYGMSYYD.

At 1–44 (MPRLQQKWLNSRECPTLRGEAAKGLFPTKDDPSAHKRMSPSDKD) the chain is on the cytoplasmic side. The chain crosses the membrane as a helical span at residues 45–65 (ILILCCKLGIALLCLGLLGEV). Over 66–320 (AVRARRALTL…AKTYGMSYYD (255 aa)) the chain is Extracellular. Residues asparagine 80, asparagine 81, asparagine 90, asparagine 94, asparagine 132, and asparagine 147 are each glycosylated (N-linked (GlcNAc...) asparagine; by host).

The protein belongs to the mouse mammary tumor virus PR73 superantigen family.

Its subcellular location is the membrane. In terms of biological role, superantigen. The sequence is that of Protein PR73 from Mus musculus (Mouse).